A 1596-amino-acid chain; its full sequence is A-kinase anchor protein SPHKAP (1596 aa).

5 disordered regions span residues 214 to 233 (KHGRLAGQRAAEDDTNRSVS), 242 to 319 (ASEQ…TPKQ), 389 to 432 (DNSE…GHPA), 462 to 481 (SGEEYECEDEEEESETDQGE), and 760 to 809 (EQSD…SSSS). Residues 292-306 (TLCTSSNSQKLSRTY) are compositionally biased toward polar residues. Positions 462-479 (SGEEYECEDEEEESETDQ) are enriched in acidic residues. Residues 829-846 (FAEDLATTVVSMATELAA) are PKA-RII subunit binding domain. Disordered regions lie at residues 958–1022 (VVDT…ISKQ), 1282–1310 (VGERRHGFKHSRCNNSGNRPGVEHQENSC), and 1328–1443 (VPLI…SSLG). Over residues 959–971 (VDTSKSGQSSRSR) the composition is skewed to polar residues. Over residues 1333–1356 (IEPDQREEASEEKGGVETHHREAS) the composition is skewed to basic and acidic residues. Over residues 1357 to 1372 (HQTQQQSGKGSETATK) the composition is skewed to polar residues. 2 stretches are compositionally biased toward low complexity: residues 1398–1409 (LSASSEESGSGS) and 1430–1443 (LSEGNGNSSTSSLG).

This sequence belongs to the AKAP110 family.

The protein localises to the cytoplasm. In terms of biological role, anchoring protein that mediates the subcellular compartmentation of cAMP-dependent protein kinase (PKA type II). This is A-kinase anchor protein SPHKAP (sphkap) from Danio rerio (Zebrafish).